A 264-amino-acid chain; its full sequence is Phosphoribosylaminoimidazole-succinocarboxamide synthase (264 aa).

The protein belongs to the SAICAR synthetase family.

The catalysed reaction is 5-amino-1-(5-phospho-D-ribosyl)imidazole-4-carboxylate + L-aspartate + ATP = (2S)-2-[5-amino-1-(5-phospho-beta-D-ribosyl)imidazole-4-carboxamido]succinate + ADP + phosphate + 2 H(+). It participates in purine metabolism; IMP biosynthesis via de novo pathway; 5-amino-1-(5-phospho-D-ribosyl)imidazole-4-carboxamide from 5-amino-1-(5-phospho-D-ribosyl)imidazole-4-carboxylate: step 1/2. This chain is Phosphoribosylaminoimidazole-succinocarboxamide synthase (purC), found in Synechocystis sp. (strain ATCC 27184 / PCC 6803 / Kazusa).